A 142-amino-acid chain; its full sequence is Holo-[acyl-carrier-protein] synthase (142 aa).

Mg(2+)-binding residues include Asp8 and Glu57.

This sequence belongs to the P-Pant transferase superfamily. AcpS family. The cofactor is Mg(2+).

The protein resides in the cytoplasm. It catalyses the reaction apo-[ACP] + CoA = holo-[ACP] + adenosine 3',5'-bisphosphate + H(+). In terms of biological role, transfers the 4'-phosphopantetheine moiety from coenzyme A to a Ser of acyl-carrier-protein. This is Holo-[acyl-carrier-protein] synthase from Ruegeria sp. (strain TM1040) (Silicibacter sp.).